Here is a 511-residue protein sequence, read N- to C-terminus: UDP-N-acetylhexosamine pyrophosphorylase-like protein 1 (511 aa).

The span at 1-19 shows a compositional bias: basic and acidic residues; the sequence is MDRSESAESAESRRRRAEE. The disordered stretch occupies residues 1–22; it reads MDRSESAESAESRRRRAEESGQ. The Substrate binding signature appears at 117–120; sequence LAGG. UTP is bound by residues 117–120, K131, Q205, and G231; that span reads LAGG. N232 contributes to the substrate binding site. UTP is bound at residue D262. The Substrate binding motif lies at 312–313; sequence EY. Residue K386 coordinates UTP. K416 provides a ligand contact to substrate.

This sequence belongs to the UDPGP type 1 family.

This is UDP-N-acetylhexosamine pyrophosphorylase-like protein 1 (uap1l1) from Xenopus tropicalis (Western clawed frog).